The primary structure comprises 159 residues: Ribosome maturation factor RimP (159 aa).

Belongs to the RimP family.

The protein localises to the cytoplasm. Required for maturation of 30S ribosomal subunits. This is Ribosome maturation factor RimP from Geotalea uraniireducens (strain Rf4) (Geobacter uraniireducens).